The chain runs to 369 residues: Glutamate 5-kinase (369 aa).

Lys14 is an ATP binding site. Residues Ser56, Asp143, and Asn155 each coordinate substrate. Residues 175–176 and 215–221 each bind ATP; these read SD and TGGMASK. Residues 277 to 351 form the PUA domain; it reads AGKIRLDDGA…GMQTQDLPDG (75 aa).

The protein belongs to the glutamate 5-kinase family.

The protein resides in the cytoplasm. The enzyme catalyses L-glutamate + ATP = L-glutamyl 5-phosphate + ADP. It functions in the pathway amino-acid biosynthesis; L-proline biosynthesis; L-glutamate 5-semialdehyde from L-glutamate: step 1/2. Catalyzes the transfer of a phosphate group to glutamate to form L-glutamate 5-phosphate. This is Glutamate 5-kinase from Corynebacterium glutamicum (strain ATCC 13032 / DSM 20300 / JCM 1318 / BCRC 11384 / CCUG 27702 / LMG 3730 / NBRC 12168 / NCIMB 10025 / NRRL B-2784 / 534).